Reading from the N-terminus, the 124-residue chain is Riboflavin kinase (124 aa).

Gly-10–Ala-15 contributes to the CDP binding site. Mg(2+) is bound by residues Thr-39 and Asn-41. Residues Thr-93 and Glu-101 each contribute to the FMN site. CDP is bound at residue Asp-106–Arg-109.

It belongs to the archaeal riboflavin kinase family. Mg(2+) is required as a cofactor.

The enzyme catalyses riboflavin + CTP = CDP + FMN + H(+). It functions in the pathway cofactor biosynthesis; FMN biosynthesis; FMN from riboflavin (CTP route): step 1/1. Its function is as follows. Catalyzes the CTP-dependent phosphorylation of riboflavin (vitamin B2) to form flavin mononucleotide (FMN). This is Riboflavin kinase from Methanobrevibacter smithii (strain ATCC 35061 / DSM 861 / OCM 144 / PS).